Consider the following 489-residue polypeptide: Coiled-coil domain-containing protein 77 (489 aa).

S38 is subject to Phosphoserine. 2 coiled-coil regions span residues 57-120 (SQEL…QVCL) and 212-487 (ERHQ…NALR).

This is Coiled-coil domain-containing protein 77 (Ccdc77) from Mus musculus (Mouse).